Reading from the N-terminus, the 107-residue chain is Large ribosomal subunit protein eL33B (107 aa).

Ala-2 carries the N-acetylalanine; partial modification. A Glycyl lysine isopeptide (Lys-Gly) (interchain with G-Cter in ubiquitin) cross-link involves residue Lys-47.

It belongs to the eukaryotic ribosomal protein eL33 family. Component of the large ribosomal subunit (LSU). Mature yeast ribosomes consist of a small (40S) and a large (60S) subunit. The 40S small subunit contains 1 molecule of ribosomal RNA (18S rRNA) and 33 different proteins (encoded by 57 genes). The large 60S subunit contains 3 rRNA molecules (25S, 5.8S and 5S rRNA) and 46 different proteins (encoded by 81 genes). In terms of processing, N-terminally acetylated by acetyltransferase NatA.

Its subcellular location is the cytoplasm. Its function is as follows. Component of the ribosome, a large ribonucleoprotein complex responsible for the synthesis of proteins in the cell. The small ribosomal subunit (SSU) binds messenger RNAs (mRNAs) and translates the encoded message by selecting cognate aminoacyl-transfer RNA (tRNA) molecules. The large subunit (LSU) contains the ribosomal catalytic site termed the peptidyl transferase center (PTC), which catalyzes the formation of peptide bonds, thereby polymerizing the amino acids delivered by tRNAs into a polypeptide chain. The nascent polypeptides leave the ribosome through a tunnel in the LSU and interact with protein factors that function in enzymatic processing, targeting, and the membrane insertion of nascent chains at the exit of the ribosomal tunnel. This chain is Large ribosomal subunit protein eL33B, found in Saccharomyces cerevisiae (strain ATCC 204508 / S288c) (Baker's yeast).